The primary structure comprises 361 residues: Phosphoserine aminotransferase (361 aa).

L-glutamate is bound by residues Ser-9 and Arg-42. Pyridoxal 5'-phosphate is bound by residues 76-77 (AR), Trp-103, Thr-153, Asp-173, and Gln-196. Position 197 is an N6-(pyridoxal phosphate)lysine (Lys-197). 238-239 (NT) contacts pyridoxal 5'-phosphate.

It belongs to the class-V pyridoxal-phosphate-dependent aminotransferase family. SerC subfamily. In terms of assembly, homodimer. Pyridoxal 5'-phosphate serves as cofactor.

It localises to the cytoplasm. The catalysed reaction is O-phospho-L-serine + 2-oxoglutarate = 3-phosphooxypyruvate + L-glutamate. It carries out the reaction 4-(phosphooxy)-L-threonine + 2-oxoglutarate = (R)-3-hydroxy-2-oxo-4-phosphooxybutanoate + L-glutamate. Its pathway is amino-acid biosynthesis; L-serine biosynthesis; L-serine from 3-phospho-D-glycerate: step 2/3. It functions in the pathway cofactor biosynthesis; pyridoxine 5'-phosphate biosynthesis; pyridoxine 5'-phosphate from D-erythrose 4-phosphate: step 3/5. Its function is as follows. Catalyzes the reversible conversion of 3-phosphohydroxypyruvate to phosphoserine and of 3-hydroxy-2-oxo-4-phosphonooxybutanoate to phosphohydroxythreonine. The protein is Phosphoserine aminotransferase of Wigglesworthia glossinidia brevipalpis.